The following is a 221-amino-acid chain: Cutinase 3 (221 aa).

An N-terminal signal peptide occupies residues methionine 1–alanine 17. Disulfide bonds link cysteine 44/cysteine 122 and cysteine 70/cysteine 84. Residue serine 133 is the Nucleophile of the active site. A disulfide bond links cysteine 184 and cysteine 191. Aspartate 188 is a catalytic residue. Histidine 201 (proton donor/acceptor) is an active-site residue.

Belongs to the cutinase family.

It is found in the secreted. The enzyme catalyses cutin + H2O = cutin monomers.. Its function is as follows. Catalyzes the hydrolysis of complex carboxylic polyesters found in the cell wall of plants. Degrades cutin, a macromolecule that forms the structure of the plant cuticle. Also degrades suberin, a specialized macromolecule found in the cell wall of various plant tissues. This chain is Cutinase 3, found in Emericella nidulans (strain FGSC A4 / ATCC 38163 / CBS 112.46 / NRRL 194 / M139) (Aspergillus nidulans).